Reading from the N-terminus, the 85-residue chain is ATP synthase subunit c (85 aa).

The next 2 membrane-spanning stretches (helical) occupy residues 10–30 and 53–73; these read IAVG…FAIL and FIIA…ALLF.

The protein belongs to the ATPase C chain family. In terms of assembly, F-type ATPases have 2 components, F(1) - the catalytic core - and F(0) - the membrane proton channel. F(1) has five subunits: alpha(3), beta(3), gamma(1), delta(1), epsilon(1). F(0) has three main subunits: a(1), b(2) and c(10-14). The alpha and beta chains form an alternating ring which encloses part of the gamma chain. F(1) is attached to F(0) by a central stalk formed by the gamma and epsilon chains, while a peripheral stalk is formed by the delta and b chains.

It is found in the cell inner membrane. F(1)F(0) ATP synthase produces ATP from ADP in the presence of a proton or sodium gradient. F-type ATPases consist of two structural domains, F(1) containing the extramembraneous catalytic core and F(0) containing the membrane proton channel, linked together by a central stalk and a peripheral stalk. During catalysis, ATP synthesis in the catalytic domain of F(1) is coupled via a rotary mechanism of the central stalk subunits to proton translocation. In terms of biological role, key component of the F(0) channel; it plays a direct role in translocation across the membrane. A homomeric c-ring of between 10-14 subunits forms the central stalk rotor element with the F(1) delta and epsilon subunits. The chain is ATP synthase subunit c from Aliivibrio salmonicida (strain LFI1238) (Vibrio salmonicida (strain LFI1238)).